We begin with the raw amino-acid sequence, 336 residues long: Porphobilinogen deaminase (336 aa).

The residue at position 251 (Cys-251) is an S-(dipyrrolylmethanemethyl)cysteine. Ser-327 and Ser-329 each carry phosphoserine.

Belongs to the HMBS family. It depends on dipyrromethane as a cofactor.

It carries out the reaction 4 porphobilinogen + H2O = hydroxymethylbilane + 4 NH4(+). It functions in the pathway porphyrin-containing compound metabolism; protoporphyrin-IX biosynthesis; coproporphyrinogen-III from 5-aminolevulinate: step 2/4. Its function is as follows. Tetrapolymerization of the monopyrrole PBG into the hydroxymethylbilane pre-uroporphyrinogen in several discrete steps. The sequence is that of Porphobilinogen deaminase (hem3) from Schizosaccharomyces pombe (strain 972 / ATCC 24843) (Fission yeast).